We begin with the raw amino-acid sequence, 269 residues long: Extracellular metalloprotease UREG_07765 (269 aa).

Positions 1–18 are cleaved as a signal peptide; sequence MRLSVSLLALAFGSLVAA. A glycan (N-linked (GlcNAc...) asparagine) is linked at N179. Zn(2+) is bound at residue H191. The active site involves E192. Zn(2+) is bound at residue H195. A disordered region spans residues 207–227; the sequence is VSDTPPQRSSTQGCPSSRDSC. Positions 210–225 are enriched in polar residues; that stretch reads TPPQRSSTQGCPSSRD. C220 and C246 form a disulfide bridge.

Belongs to the peptidase M43B family.

It localises to the secreted. Functionally, secreted metalloproteinase that allows assimilation of proteinaceous substrates. The chain is Extracellular metalloprotease UREG_07765 from Uncinocarpus reesii (strain UAMH 1704).